The following is a 206-amino-acid chain: Small ribosomal subunit protein eS1 (206 aa).

Belongs to the eukaryotic ribosomal protein eS1 family.

This chain is Small ribosomal subunit protein eS1, found in Methanocorpusculum labreanum (strain ATCC 43576 / DSM 4855 / Z).